Here is a 405-residue protein sequence, read N- to C-terminus: Glucose-1-phosphate adenylyltransferase 1 (405 aa).

Alpha-D-glucose 1-phosphate is bound by residues Tyr-96, Gly-161, Glu-176–Lys-177, and Ser-194.

Belongs to the bacterial/plant glucose-1-phosphate adenylyltransferase family. In terms of assembly, homotetramer.

It catalyses the reaction alpha-D-glucose 1-phosphate + ATP + H(+) = ADP-alpha-D-glucose + diphosphate. The protein operates within glycan biosynthesis; glycogen biosynthesis. Involved in the biosynthesis of ADP-glucose, a building block required for the elongation reactions to produce glycogen. Catalyzes the reaction between ATP and alpha-D-glucose 1-phosphate (G1P) to produce pyrophosphate and ADP-Glc. The sequence is that of Glucose-1-phosphate adenylyltransferase 1 from Vibrio vulnificus (strain CMCP6).